The following is a 292-amino-acid chain: tRNA(Ile)-lysidine synthase (292 aa).

32 to 37 (SGGADS) contributes to the ATP binding site.

The protein belongs to the tRNA(Ile)-lysidine synthase family.

The protein resides in the cytoplasm. The catalysed reaction is cytidine(34) in tRNA(Ile2) + L-lysine + ATP = lysidine(34) in tRNA(Ile2) + AMP + diphosphate + H(+). In terms of biological role, ligates lysine onto the cytidine present at position 34 of the AUA codon-specific tRNA(Ile) that contains the anticodon CAU, in an ATP-dependent manner. Cytidine is converted to lysidine, thus changing the amino acid specificity of the tRNA from methionine to isoleucine. This is tRNA(Ile)-lysidine synthase from Corynebacterium diphtheriae (strain ATCC 700971 / NCTC 13129 / Biotype gravis).